The following is a 176-amino-acid chain: ATP-dependent protease subunit HslV (176 aa).

The active site involves Thr-5. The Na(+) site is built by Ser-161, Cys-164, and Thr-167.

This sequence belongs to the peptidase T1B family. HslV subfamily. As to quaternary structure, a double ring-shaped homohexamer of HslV is capped on each side by a ring-shaped HslU homohexamer. The assembly of the HslU/HslV complex is dependent on binding of ATP.

It is found in the cytoplasm. The catalysed reaction is ATP-dependent cleavage of peptide bonds with broad specificity.. With respect to regulation, allosterically activated by HslU binding. Functionally, protease subunit of a proteasome-like degradation complex believed to be a general protein degrading machinery. This chain is ATP-dependent protease subunit HslV, found in Thermoanaerobacter sp. (strain X514).